A 333-amino-acid chain; its full sequence is Fructose-1,6-bisphosphatase class 1 (333 aa).

Residues Glu-90, Asp-113, Leu-115, and Asp-116 each contribute to the Mg(2+) site. Residues 116–119 (DGSS), Asn-209, Tyr-242, and Lys-272 contribute to the substrate site. Glu-278 contacts Mg(2+).

Belongs to the FBPase class 1 family. Homotetramer. Mg(2+) serves as cofactor.

It is found in the cytoplasm. The enzyme catalyses beta-D-fructose 1,6-bisphosphate + H2O = beta-D-fructose 6-phosphate + phosphate. The protein operates within carbohydrate biosynthesis; gluconeogenesis. This chain is Fructose-1,6-bisphosphatase class 1, found in Pasteurella multocida (strain Pm70).